We begin with the raw amino-acid sequence, 488 residues long: Glutamyl-tRNA(Gln) amidotransferase subunit A (488 aa).

Catalysis depends on charge relay system residues Lys-77 and Ser-152. Ser-176 serves as the catalytic Acyl-ester intermediate.

This sequence belongs to the amidase family. GatA subfamily. Heterotrimer of A, B and C subunits.

The enzyme catalyses L-glutamyl-tRNA(Gln) + L-glutamine + ATP + H2O = L-glutaminyl-tRNA(Gln) + L-glutamate + ADP + phosphate + H(+). Functionally, allows the formation of correctly charged Gln-tRNA(Gln) through the transamidation of misacylated Glu-tRNA(Gln) in organisms which lack glutaminyl-tRNA synthetase. The reaction takes place in the presence of glutamine and ATP through an activated gamma-phospho-Glu-tRNA(Gln). In Streptococcus equi subsp. zooepidemicus (strain MGCS10565), this protein is Glutamyl-tRNA(Gln) amidotransferase subunit A.